The chain runs to 977 residues: Receptor protein-tyrosine kinase CEPR2 (977 aa).

Positions 1–31 (MSRRPDLLRGSVVATVAATFLLFIFPPNVES) are cleaved as a signal peptide. Residues 32 to 620 (TVEKQALFRF…NVKRNSSLDG (589 aa)) are Extracellular-facing. N-linked (GlcNAc...) asparagine glycosylation is present at N85. LRR repeat units follow at residues 97-121 (LTKLSTLSLPSNFISGRIPPEIVNC), 122-146 (KNLKVLNLTSNRLSGTIPNLSPLKS), 148-167 (EILDISGNFLNGEFQSWIGN), 168-192 (MNQLVSLGLGNNHYEEGIIPESIGG), 193-217 (LKKLTWLFLARSNLTGKIPNSIFDL), 219-241 (ALDTFDIANNAISDDFPILISRL), 242-265 (VNLTKIELFNNSLTGKIPPEIKNL), 266-288 (TRLREFDISSNQLSGVLPEELGV), 290-312 (KELRVFHCHENNFTGEFPSGFGD), 313-338 (LSHLTSLSIYRNNFSGEFPVNIGRFS), 340-361 (LDTVDISENEFTGPFPRFLCQN), 363-385 (KLQFLLALQNEFSGEIPRSYGEC), 386-409 (KSLLRLRINNNRLSGQVVEGFWSL), 411-433 (LAKMIDLSDNELTGEVSPQIGLS), 434-457 (TELSQLILQNNRFSGKIPRELGRL), 458-481 (TNIERIYLSNNNLSGEIPMEVGDL), 482-504 (KELSSLHLENNSLTGFIPKELKN), 506-529 (VKLVDLNLAKNFLTGEIPNSLSQI), 530-553 (ASLNSLDFSGNRLTGEIPASLVKL), and 555-576 (LSFIDLSGNQLSGRIPPDLLAV). N128 carries an N-linked (GlcNAc...) asparagine glycan. N205 carries an N-linked (GlcNAc...) asparagine glycan. Residues N243, N251, and N264 are each glycosylated (N-linked (GlcNAc...) asparagine). N-linked (GlcNAc...) asparagine glycans are attached at residues N301 and N325. N-linked (GlcNAc...) asparagine glycans are attached at residues N469 and N491. N-linked (GlcNAc...) asparagine glycosylation occurs at N615. A helical membrane pass occupies residues 621-641 (TLLFLALAIVVVVLVSGLFAL). Residues 642–977 (RYRVVKIREL…SQDTTGKITV (336 aa)) are Cytoplasmic-facing. The Protein kinase domain occupies 683–965 (LDEDHVIGSG…RKLDDADPCV (283 aa)). ATP-binding positions include 689 to 697 (IGSGSAGKV) and K712. Y801 carries the post-translational modification Phosphotyrosine. The Proton acceptor role is filled by D814. The residue at position 846 (S846) is a Phosphoserine. 2 positions are modified to phosphotyrosine: Y854 and Y861.

It belongs to the protein kinase superfamily. Ser/Thr protein kinase family. Interacts with the root-derived peptide CEP1. Binds to the ammonium transporter AMT1-1. In terms of tissue distribution, expressed in mature leaves, primary roots, and the root tips of both primary and lateral roots.

It is found in the cell membrane. The catalysed reaction is L-tyrosyl-[protein] + ATP = O-phospho-L-tyrosyl-[protein] + ADP + H(+). Its function is as follows. Receptor kinase involved in the perception of C-terminally encoded plant signaling peptide (CEP) and subsequent regulation of root and shoot development. Together with CEPR1, mediates systemic nitrogen (N)-demand signaling upon the perception of root-derived peptides (e.g. CEP1) via the up-regulation of genes involved in N uptake and assimilation pathways. The protein is Receptor protein-tyrosine kinase CEPR2 of Arabidopsis thaliana (Mouse-ear cress).